The following is a 182-amino-acid chain: Isopentenyl-diphosphate Delta-isomerase (182 aa).

Residues His-25 and His-32 each coordinate Mn(2+). In terms of domain architecture, Nudix hydrolase spans 30 to 164; sequence LLHLAFSSWL…PWAFSPWMVM (135 aa). Cys-67 is a catalytic residue. A Mg(2+)-binding site is contributed by Cys-67. Mn(2+) is bound at residue His-69. Glu-87 is a Mg(2+) binding site. 2 residues coordinate Mn(2+): Glu-114 and Glu-116. The active site involves Glu-116.

The protein belongs to the IPP isomerase type 1 family. As to quaternary structure, homodimer. It depends on Mg(2+) as a cofactor. Mn(2+) serves as cofactor.

It is found in the cytoplasm. The enzyme catalyses isopentenyl diphosphate = dimethylallyl diphosphate. Its pathway is isoprenoid biosynthesis; dimethylallyl diphosphate biosynthesis; dimethylallyl diphosphate from isopentenyl diphosphate: step 1/1. In terms of biological role, catalyzes the 1,3-allylic rearrangement of the homoallylic substrate isopentenyl (IPP) to its highly electrophilic allylic isomer, dimethylallyl diphosphate (DMAPP). The polypeptide is Isopentenyl-diphosphate Delta-isomerase (Escherichia coli O6:H1 (strain CFT073 / ATCC 700928 / UPEC)).